Here is a 348-residue protein sequence, read N- to C-terminus: Holliday junction branch migration complex subunit RuvB (348 aa).

A disordered region spans residues 1 to 20 (MKPPARMVSPERRSDDVGDT). Positions 1-183 (MKPPARMVSP…FGIPIRLNFY (183 aa)) are large ATPase domain (RuvB-L). ATP is bound by residues leucine 22, arginine 23, glycine 64, lysine 67, threonine 68, threonine 69, 130–132 (EDF), arginine 173, tyrosine 183, and arginine 220. Threonine 68 is a Mg(2+) binding site. The interval 184–254 (TVEELEGIVT…IADHALSALE (71 aa)) is small ATPAse domain (RuvB-S). The head domain (RuvB-H) stretch occupies residues 257-348 (AAGLDAMDRR…QIGLFGNDDD (92 aa)). The DNA site is built by arginine 293, arginine 312, and arginine 317.

Belongs to the RuvB family. Homohexamer. Forms an RuvA(8)-RuvB(12)-Holliday junction (HJ) complex. HJ DNA is sandwiched between 2 RuvA tetramers; dsDNA enters through RuvA and exits via RuvB. An RuvB hexamer assembles on each DNA strand where it exits the tetramer. Each RuvB hexamer is contacted by two RuvA subunits (via domain III) on 2 adjacent RuvB subunits; this complex drives branch migration. In the full resolvosome a probable DNA-RuvA(4)-RuvB(12)-RuvC(2) complex forms which resolves the HJ.

The protein localises to the cytoplasm. The enzyme catalyses ATP + H2O = ADP + phosphate + H(+). The RuvA-RuvB-RuvC complex processes Holliday junction (HJ) DNA during genetic recombination and DNA repair, while the RuvA-RuvB complex plays an important role in the rescue of blocked DNA replication forks via replication fork reversal (RFR). RuvA specifically binds to HJ cruciform DNA, conferring on it an open structure. The RuvB hexamer acts as an ATP-dependent pump, pulling dsDNA into and through the RuvAB complex. RuvB forms 2 homohexamers on either side of HJ DNA bound by 1 or 2 RuvA tetramers; 4 subunits per hexamer contact DNA at a time. Coordinated motions by a converter formed by DNA-disengaged RuvB subunits stimulates ATP hydrolysis and nucleotide exchange. Immobilization of the converter enables RuvB to convert the ATP-contained energy into a lever motion, pulling 2 nucleotides of DNA out of the RuvA tetramer per ATP hydrolyzed, thus driving DNA branch migration. The RuvB motors rotate together with the DNA substrate, which together with the progressing nucleotide cycle form the mechanistic basis for DNA recombination by continuous HJ branch migration. Branch migration allows RuvC to scan DNA until it finds its consensus sequence, where it cleaves and resolves cruciform DNA. The sequence is that of Holliday junction branch migration complex subunit RuvB from Bradyrhizobium sp. (strain ORS 278).